A 100-amino-acid polypeptide reads, in one-letter code: Small ribosomal subunit protein uS14c (100 aa).

The protein belongs to the universal ribosomal protein uS14 family. In terms of assembly, part of the 30S ribosomal subunit.

It localises to the plastid. Its subcellular location is the chloroplast. Binds 16S rRNA, required for the assembly of 30S particles. This is Small ribosomal subunit protein uS14c from Lactuca sativa (Garden lettuce).